The sequence spans 778 residues: Tubulin polyglutamylase ttll6 (778 aa).

The tract at residues 1–43 (MGTPAERSVSEVCRCEPDPGLEGEGWGSDTHAEPSNTPIPLPV) is disordered. The 343-residue stretch at 51–393 (KKKLWINLTN…LGACDRRKIT (343 aa)) folds into the TTL domain. ATP is bound by residues Lys-168, 174 to 175 (QG), 196 to 199 (QVYM), and 209 to 211 (KFD). An a protein-binding site is contributed by Gln-174. Position 235 (Arg-235) interacts with L-glutamate. 257-258 (TN) is an ATP binding site. Residues Tyr-259 and Lys-277 each coordinate L-glutamate. Residues Asp-340, Glu-353, and Asn-355 each coordinate Mg(2+). His-356 lines the a protein pocket. The interval 365-445 (RLDREVKDSL…MGGFRRIFPR (81 aa)) is c-MTBD region. Lys-371 is a binding site for L-glutamate. Composition is skewed to basic and acidic residues over residues 402-418 (ERLQ…EEPR), 485-510 (KQEQ…GEKV), 533-542 (SVREETPVSL), and 760-778 (LSHD…EHSL). 3 disordered regions span residues 402 to 422 (ERLQ…QSQA), 485 to 542 (KQEQ…PVSL), and 758 to 778 (PHLS…EHSL).

This sequence belongs to the tubulin--tyrosine ligase family. Mg(2+) is required as a cofactor.

It localises to the cytoplasm. The protein localises to the cytoskeleton. It is found in the cilium axoneme. The protein resides in the cilium basal body. It carries out the reaction L-glutamyl-[protein] + L-glutamate + ATP = gamma-L-glutamyl-L-glutamyl-[protein] + ADP + phosphate + H(+). The enzyme catalyses (L-glutamyl)(n)-gamma-L-glutamyl-L-glutamyl-[protein] + L-glutamate + ATP = (L-glutamyl)(n+1)-gamma-L-glutamyl-L-glutamyl-[protein] + ADP + phosphate + H(+). Its function is as follows. Polyglutamylase which modifies both tubulin and non-tubulin proteins, generating alpha-linked polyglutamate side chains on the gamma-carboxyl group of specific glutamate residues of target proteins. Preferentially mediates ATP-dependent long polyglutamate chain elongation over the initiation step of the polyglutamylation reaction. Preferentially modifies the alpha-tubulin tail over a beta-tail. Mediates microtubule polyglutamylation in cilia axoneme, which is important for ciliary structural formation and motility. Polyglutamylates olfactory cilia, necessary for the regulation of ciliary structure and beating. This Danio rerio (Zebrafish) protein is Tubulin polyglutamylase ttll6.